Reading from the N-terminus, the 389-residue chain is Terminal nucleotidyltransferase 5D (389 aa).

It belongs to the TENT family. As to expression, restricted to testis.

It catalyses the reaction RNA(n) + ATP = RNA(n)-3'-adenine ribonucleotide + diphosphate. Functionally, catalyzes the transfer of one adenosine molecule from an ATP to an mRNA poly(A) tail bearing a 3'-OH terminal group. This is Terminal nucleotidyltransferase 5D from Homo sapiens (Human).